The chain runs to 241 residues: Dihydropteridine reductase (241 aa).

11–35 serves as a coordination point for NADP(+); that stretch reads LVYGGRGALGSRCVQAFRARNWWVA. N6-succinyllysine is present on residues K70, K76, K93, and K99. Residue Y147 is the Proton acceptor of the active site. S170 carries the phosphoserine modification.

It belongs to the short-chain dehydrogenases/reductases (SDR) family. In terms of assembly, homodimer.

It carries out the reaction 5,6,7,8-tetrahydropteridine + NAD(+) = 6,7-dihydropteridine + NADH + H(+). The catalysed reaction is 5,6,7,8-tetrahydropteridine + NADP(+) = 6,7-dihydropteridine + NADPH + H(+). Its function is as follows. Catalyzes the conversion of quinonoid dihydrobiopterin into tetrahydrobiopterin. In Rattus norvegicus (Rat), this protein is Dihydropteridine reductase (Qdpr).